The sequence spans 158 residues: NADH-quinone oxidoreductase subunit B (158 aa).

Cys36, Cys37, Cys101, and Cys131 together coordinate [4Fe-4S] cluster.

It belongs to the complex I 20 kDa subunit family. NDH-1 is composed of 14 different subunits. Subunits NuoB, C, D, E, F, and G constitute the peripheral sector of the complex. It depends on [4Fe-4S] cluster as a cofactor.

The protein localises to the cell inner membrane. The enzyme catalyses a quinone + NADH + 5 H(+)(in) = a quinol + NAD(+) + 4 H(+)(out). Functionally, NDH-1 shuttles electrons from NADH, via FMN and iron-sulfur (Fe-S) centers, to quinones in the respiratory chain. The immediate electron acceptor for the enzyme in this species is believed to be ubiquinone. Couples the redox reaction to proton translocation (for every two electrons transferred, four hydrogen ions are translocated across the cytoplasmic membrane), and thus conserves the redox energy in a proton gradient. This is NADH-quinone oxidoreductase subunit B from Francisella tularensis subsp. tularensis (strain FSC 198).